A 362-amino-acid polypeptide reads, in one-letter code: Putative membrane-bound acyltransferase YfiQ (362 aa).

The next 10 membrane-spanning stretches (helical) occupy residues C11–A31, F44–A64, V82–M102, V119–H139, W153–S173, G181–A201, W220–G240, I252–F267, Y283–L303, and I308–T328.

This sequence belongs to the acyltransferase 3 family.

Its subcellular location is the cell membrane. The polypeptide is Putative membrane-bound acyltransferase YfiQ (yfiQ) (Bacillus subtilis (strain 168)).